The chain runs to 348 residues: 4-hydroxy-2-oxovalerate aldolase 2 (348 aa).

The 252-residue stretch at 5–256 (LQICDSTLRD…EARIKLFDAL (252 aa)) folds into the Pyruvate carboxyltransferase domain. Substrate is bound at residue 13–14 (RD). Asp14 lines the Mn(2+) pocket. Residue His17 is the Proton acceptor of the active site. Residues Ser168 and His195 each contribute to the substrate site. Residues His195 and His197 each coordinate Mn(2+).

The protein belongs to the 4-hydroxy-2-oxovalerate aldolase family.

It carries out the reaction (S)-4-hydroxy-2-oxopentanoate = acetaldehyde + pyruvate. This chain is 4-hydroxy-2-oxovalerate aldolase 2, found in Salinispora arenicola (strain CNS-205).